A 268-amino-acid polypeptide reads, in one-letter code: Microtubule-associated protein RP/EB family member 1 (268 aa).

Ala-2 bears the N-acetylalanine mark. The Calponin-homology (CH) domain occupies 14-116 (NLSRHDMLAW…FVQWFKKFFD (103 aa)). Lys-66 is modified (N6-crotonyllysine). Tyr-124 bears the Phosphotyrosine mark. Positions 124 to 268 (YDPVAARQGQ…GGPQEEQEEY (145 aa)) are interaction with MTUS2/TIP150. A disordered region spans residues 146–187 (LNKPKKPLTSSSAAPQRPISTQRTAAAPKAGPGVVRKNPGVG). A compositionally biased stretch (polar residues) spans 153-169 (LTSSSAAPQRPISTQRT). Phosphoserine is present on residues Ser-155 and Ser-165. Residues 185 to 255 (GVGNGDDEAA…LYATDEGFVI (71 aa)) enclose the EB1 C-terminal domain. The segment at 185-268 (GVGNGDDEAA…GGPQEEQEEY (84 aa)) is interaction with CDK5RAP2. Positions 206–211 (TVEDLE) are interaction with APC. Positions 208 to 268 (EDLEKERDFY…GGPQEEQEEY (61 aa)) are DCTN1-binding. Lys-220 bears the N6-acetyllysine mark. Positions 220-242 (KLRNIELICQENEGENDPVLQRI) are APC-binding. Residues 232 to 255 (EGENDPVLQRIVDILYATDEGFVI) are interaction with SKA1.

Belongs to the MAPRE family. As to quaternary structure, homodimer. Heterodimer with MAPRE3. Interacts with DCTN1, DCTN2, TERF1 and dynein intermediate chain. Interaction with DIAPH1 and DIAPH2. Interacts (via C-terminal residues 206-211) with APC (via C-terminal residues 2674-2843); the interaction inhibits association with and bundling of F-actin. Interacts with CLASP2, DST, KIF2C and STIM1; probably required for their targeting to the growing microtubule plus ends. Interacts with MTUS2; interaction is direct and probably targets MTUS2 to microtubules. Interacts (via C-terminus) with SKA1 (via SXIP motif); the interaction is direct and stabilizes the kinetochore-microtubule attachment of the SKA1 complex. Interacts with APC2. Interacts with CLASP1. Interacts with CDK5RAP2. Interacts with MACF1. Interacts with RABL2/RABL2A; binds preferentially to GTP-bound RABL2. Interacts with KCNAB2. Interacts (via C-terminus) with CLIP1. Interacts with SLAIN2 and SLAIN1. Interacts with KIF18B; this interaction is required for efficient accumulation of KIF18B at microtubule plus ends. Interacts with MISP. Interacts with KNSTRN. Interacts with NCKAP5L. Interacts with CAMSAP2. Interacts with PDE4DIP isoform 13/MMG8/SMYLE; this interaction is required for its recruitment to the Golgi apparatus. Forms a pericentrosomal complex with AKAP9, CDK5RAP2 and PDE4DIP isoform 13/MMG8/SMYLE; within this complex, MAPRE1 binding to CDK5RAP2 may be mediated by PDE4DIP. Interacts with AKNA. Interacts with GAS2L1, GAS2L2, and GAS2L3. Interacts with RARRES1 and AGBL2. In terms of processing, acetylation at Lys-220 by KAT2B/PCAF promotes dynamic kinetochore-microtubule interactions in early mitosis. Crotonylated by KAT5 during mitosis, promoting astral microtubule plasticity and dynamic connection between astral microtubules and the cortex during mitotic chromosome segregation, thereby ensuring accurate spindle positioning in mitosis. Decrotonylated by HDAC3. In terms of tissue distribution, ubiquitously expressed.

The protein localises to the cytoplasm. It localises to the cytoskeleton. Its subcellular location is the microtubule organizing center. It is found in the centrosome. The protein resides in the golgi apparatus. The protein localises to the spindle. It localises to the spindle pole. Functionally, plus-end tracking protein (+TIP) that binds to the plus-end of microtubules and regulates the dynamics of the microtubule cytoskeleton. Recruits other +TIP proteins to microtubules by binding to a conserved Ser-X-Leu-Pro (SXLP) motif in their polypeptide chains. Promotes cytoplasmic microtubule nucleation and elongation. Involved in mitotic spindle positioning by stabilizing microtubules and promoting dynamic connection between astral microtubules and the cortex during mitotic chromosome segregation. Assists chromosome alignment in metaphase by recruiting the SKA complex to the spindle and stabilizing its interactions with microtubule bundles (K-fibers). Also acts as a regulator of minus-end microtubule organization: interacts with the complex formed by AKAP9 and PDE4DIP, leading to recruit CAMSAP2 to the Golgi apparatus, thereby tethering non-centrosomal minus-end microtubules to the Golgi, an important step for polarized cell movement. Promotes elongation of CAMSAP2-decorated microtubule stretches on the minus-end of microtubules. Acts as a regulator of autophagosome transport via interaction with CAMSAP2. Functions downstream of Rho GTPases and DIAPH1 in stable microtubule formation. May play a role in cell migration. The polypeptide is Microtubule-associated protein RP/EB family member 1 (Homo sapiens (Human)).